The primary structure comprises 221 residues: Translation initiation factor 6 (221 aa).

It belongs to the eIF-6 family.

In terms of biological role, binds to the 50S ribosomal subunit and prevents its association with the 30S ribosomal subunit to form the 70S initiation complex. The protein is Translation initiation factor 6 of Natronomonas pharaonis (strain ATCC 35678 / DSM 2160 / CIP 103997 / JCM 8858 / NBRC 14720 / NCIMB 2260 / Gabara) (Halobacterium pharaonis).